The sequence spans 489 residues: Betaine aldehyde dehydrogenase (489 aa).

K(+) contacts are provided by Thr-26 and Asp-93. 150 to 152 contributes to the NAD(+) binding site; sequence GAW. The active-site Charge relay system is Lys-162. 176-179 is an NAD(+) binding site; sequence KPSE. K(+) is bound at residue Ile-180. 229–232 contributes to the NAD(+) binding site; the sequence is GVET. Residue Leu-245 participates in K(+) binding. Catalysis depends on Glu-251, which acts as the Proton acceptor. NAD(+) is bound by residues Gly-253, Cys-285, and Glu-386. The Nucleophile role is filled by Cys-285. Cysteine sulfenic acid (-SOH) is present on Cys-285. Positions 456 and 459 each coordinate K(+). Glu-463 functions as the Charge relay system in the catalytic mechanism.

The protein belongs to the aldehyde dehydrogenase family. As to quaternary structure, dimer of dimers. The cofactor is K(+).

It catalyses the reaction betaine aldehyde + NAD(+) + H2O = glycine betaine + NADH + 2 H(+). The protein operates within amine and polyamine biosynthesis; betaine biosynthesis via choline pathway; betaine from betaine aldehyde: step 1/1. Involved in the biosynthesis of the osmoprotectant glycine betaine. Catalyzes the irreversible oxidation of betaine aldehyde to the corresponding acid. In Paraburkholderia phytofirmans (strain DSM 17436 / LMG 22146 / PsJN) (Burkholderia phytofirmans), this protein is Betaine aldehyde dehydrogenase.